Consider the following 225-residue polypeptide: Protein-L-isoaspartate O-methyltransferase (225 aa).

Residue serine 63 is part of the active site.

This sequence belongs to the methyltransferase superfamily. L-isoaspartyl/D-aspartyl protein methyltransferase family.

It is found in the cytoplasm. It carries out the reaction [protein]-L-isoaspartate + S-adenosyl-L-methionine = [protein]-L-isoaspartate alpha-methyl ester + S-adenosyl-L-homocysteine. In terms of biological role, catalyzes the methyl esterification of L-isoaspartyl residues in peptides and proteins that result from spontaneous decomposition of normal L-aspartyl and L-asparaginyl residues. It plays a role in the repair and/or degradation of damaged proteins. The polypeptide is Protein-L-isoaspartate O-methyltransferase (Staphylothermus marinus (strain ATCC 43588 / DSM 3639 / JCM 9404 / F1)).